A 190-amino-acid polypeptide reads, in one-letter code: MSGDKPHGRLVILAGPSAVGKSTVVDRLRSDVPNLYFSVSMTTRDPRPGEVDGRDYFYVTAQEFQEKIDRGEMLEWADIHGGLQRSGTPAEPVRQAREEGRPVLVEVDLVGARNIARLIPEAETIFLAPPSWEVLVERLTGRGTESQDVINRRLETAREELAAQSEFKHVIINDDVDTAVSAIKAVLLGT.

Positions 8–188 constitute a Guanylate kinase-like domain; it reads GRLVILAGPS…AVSAIKAVLL (181 aa). Residue 15 to 22 coordinates ATP; it reads GPSAVGKS.

The protein belongs to the guanylate kinase family.

It localises to the cytoplasm. It catalyses the reaction GMP + ATP = GDP + ADP. Functionally, essential for recycling GMP and indirectly, cGMP. The sequence is that of Guanylate kinase from Corynebacterium efficiens (strain DSM 44549 / YS-314 / AJ 12310 / JCM 11189 / NBRC 100395).